Reading from the N-terminus, the 252-residue chain is Indole-3-glycerol phosphate synthase (252 aa).

The protein belongs to the TrpC family.

The enzyme catalyses 1-(2-carboxyphenylamino)-1-deoxy-D-ribulose 5-phosphate + H(+) = (1S,2R)-1-C-(indol-3-yl)glycerol 3-phosphate + CO2 + H2O. Its pathway is amino-acid biosynthesis; L-tryptophan biosynthesis; L-tryptophan from chorismate: step 4/5. This Bacillus licheniformis (strain ATCC 14580 / DSM 13 / JCM 2505 / CCUG 7422 / NBRC 12200 / NCIMB 9375 / NCTC 10341 / NRRL NRS-1264 / Gibson 46) protein is Indole-3-glycerol phosphate synthase.